A 118-amino-acid polypeptide reads, in one-letter code: Large ribosomal subunit protein bL20 (118 aa).

Belongs to the bacterial ribosomal protein bL20 family.

In terms of biological role, binds directly to 23S ribosomal RNA and is necessary for the in vitro assembly process of the 50S ribosomal subunit. It is not involved in the protein synthesizing functions of that subunit. The protein is Large ribosomal subunit protein bL20 (rplT) of Aquifex aeolicus (strain VF5).